A 218-amino-acid polypeptide reads, in one-letter code: Pyridoxine/pyridoxamine 5'-phosphate oxidase (218 aa).

Substrate is bound by residues 14 to 17 (RREY) and K72. Residues 67-72 (RIVLLK), 82-83 (YT), R88, K89, and Q111 contribute to the FMN site. Substrate contacts are provided by Y129, R133, and S137. Residues 146–147 (QS) and W191 each bind FMN. 197-199 (RLH) provides a ligand contact to substrate. R201 serves as a coordination point for FMN.

Belongs to the pyridoxamine 5'-phosphate oxidase family. In terms of assembly, homodimer. The cofactor is FMN.

It catalyses the reaction pyridoxamine 5'-phosphate + O2 + H2O = pyridoxal 5'-phosphate + H2O2 + NH4(+). It carries out the reaction pyridoxine 5'-phosphate + O2 = pyridoxal 5'-phosphate + H2O2. It participates in cofactor metabolism; pyridoxal 5'-phosphate salvage; pyridoxal 5'-phosphate from pyridoxamine 5'-phosphate: step 1/1. The protein operates within cofactor metabolism; pyridoxal 5'-phosphate salvage; pyridoxal 5'-phosphate from pyridoxine 5'-phosphate: step 1/1. Functionally, catalyzes the oxidation of either pyridoxine 5'-phosphate (PNP) or pyridoxamine 5'-phosphate (PMP) into pyridoxal 5'-phosphate (PLP). The protein is Pyridoxine/pyridoxamine 5'-phosphate oxidase of Salmonella paratyphi B (strain ATCC BAA-1250 / SPB7).